A 311-amino-acid polypeptide reads, in one-letter code: Ornithine carbamoyltransferase (311 aa).

Carbamoyl phosphate contacts are provided by residues 54 to 58 (STRTR), asparagine 81, arginine 104, and 131 to 134 (HPCQ). L-ornithine-binding positions include asparagine 164, aspartate 225, and 229–230 (DM). Carbamoyl phosphate contacts are provided by residues 268–271 (HDMP), threonine 279, and arginine 297.

It belongs to the aspartate/ornithine carbamoyltransferase superfamily. OTCase family.

It localises to the cytoplasm. The enzyme catalyses carbamoyl phosphate + L-ornithine = L-citrulline + phosphate + H(+). It functions in the pathway amino-acid biosynthesis; L-arginine biosynthesis; L-arginine from L-ornithine and carbamoyl phosphate: step 1/3. Its function is as follows. Reversibly catalyzes the transfer of the carbamoyl group from carbamoyl phosphate (CP) to the N(epsilon) atom of ornithine (ORN) to produce L-citrulline. The polypeptide is Ornithine carbamoyltransferase (argF) (Leptospira interrogans serogroup Icterohaemorrhagiae serovar copenhageni (strain Fiocruz L1-130)).